The following is a 368-amino-acid chain: D-alanine--D-alanine ligase (368 aa).

Residues 151–358 (KKLLAAEGLP…YRTLISTLVD (208 aa)) form the ATP-grasp domain. 179 to 234 (KAELGLPVFVKPARGGSSIGITRVSNWDGLDGAIAHARLHDPKVIVEGAIIGREVE) is a binding site for ATP. Residues Asp-313, Glu-325, and Asn-327 each coordinate Mg(2+).

Belongs to the D-alanine--D-alanine ligase family. The cofactor is Mg(2+). Mn(2+) serves as cofactor.

The protein resides in the cytoplasm. The enzyme catalyses 2 D-alanine + ATP = D-alanyl-D-alanine + ADP + phosphate + H(+). It participates in cell wall biogenesis; peptidoglycan biosynthesis. Cell wall formation. In Rhodococcus erythropolis (strain PR4 / NBRC 100887), this protein is D-alanine--D-alanine ligase.